We begin with the raw amino-acid sequence, 624 residues long: Chaperone protein HtpG (624 aa).

The a; substrate-binding stretch occupies residues 1-341; the sequence is MAVKQFKAES…SPDLSLNISR (341 aa). Residues 342-550 are b; sequence ELLQHDRQLK…DGELSIEMEK (209 aa). The segment at 551–624 is c; sequence VLKMMPDNNN…FANDVASLMK (74 aa).

This sequence belongs to the heat shock protein 90 family. Homodimer.

It is found in the cytoplasm. Functionally, molecular chaperone. Has ATPase activity. This chain is Chaperone protein HtpG, found in Clostridium acetobutylicum (strain ATCC 824 / DSM 792 / JCM 1419 / IAM 19013 / LMG 5710 / NBRC 13948 / NRRL B-527 / VKM B-1787 / 2291 / W).